Reading from the N-terminus, the 365-residue chain is NAC domain-containing protein 43 (365 aa).

The NAC domain maps to 16–180 (VPPGFRFHPT…GWVVCRIFKK (165 aa)). Residues 116–186 (IGMRKTLVFY…IFKKKNLHKT (71 aa)) mediate DNA binding.

As to expression, expressed in various aboveground tissues undergoing thickening of the lignified secondary wall such as anthers, filaments of stamens, the base of carpels, styles, the boundaries between siliques and pedicels, the midrib of leaf veins, and inflorescence stems, specifically in interfascicular fibers (sclerenchyma), cells differentiating into vascular vessels, and xylary fibers (secondary xylem).

The protein localises to the nucleus. Its function is as follows. Transcription activator of genes involved in biosynthesis of secondary walls. Together with NST2 and NST3, required for the secondary cell wall thickening of sclerenchymatous fibers, secondary xylem (tracheary elements), and of the anther endocethium, which is necessary for anther dehiscence. May also regulate the secondary cell wall lignification of other tissues. In Arabidopsis thaliana (Mouse-ear cress), this protein is NAC domain-containing protein 43 (NAC043).